Consider the following 92-residue polypeptide: uncharacterized protein (92 aa).

This is an uncharacterized protein from Mycobacterium tuberculosis (strain CDC 1551 / Oshkosh).